A 196-amino-acid polypeptide reads, in one-letter code: Xanthine phosphoribosyltransferase (196 aa).

Xanthine contacts are provided by leucine 26 and asparagine 33. Residue 134–138 participates in 5-phospho-alpha-D-ribose 1-diphosphate binding; it reads ASGEA. Lysine 162 provides a ligand contact to xanthine.

The protein belongs to the purine/pyrimidine phosphoribosyltransferase family. Xpt subfamily. Homodimer.

It localises to the cytoplasm. It catalyses the reaction XMP + diphosphate = xanthine + 5-phospho-alpha-D-ribose 1-diphosphate. It participates in purine metabolism; XMP biosynthesis via salvage pathway; XMP from xanthine: step 1/1. Converts the preformed base xanthine, a product of nucleic acid breakdown, to xanthosine 5'-monophosphate (XMP), so it can be reused for RNA or DNA synthesis. The protein is Xanthine phosphoribosyltransferase of Moorella thermoacetica (strain ATCC 39073 / JCM 9320).